The chain runs to 336 residues: Holliday junction branch migration complex subunit RuvB (336 aa).

Residues 1–182 (MKERIVNLET…FGMSFRMQFY (182 aa)) form a large ATPase domain (RuvB-L) region. ATP-binding positions include leucine 21, arginine 22, glycine 63, lysine 66, threonine 67, serine 68, 129–131 (EDF), arginine 172, tyrosine 182, and arginine 219. Threonine 67 serves as a coordination point for Mg(2+). The interval 183–253 (SPSELALIIK…ITLHALNELG (71 aa)) is small ATPAse domain (RuvB-S). A head domain (RuvB-H) region spans residues 256-336 (ELGFDEADLA…IPTLNPQTLF (81 aa)). Arginine 310 and arginine 315 together coordinate DNA.

The protein belongs to the RuvB family. As to quaternary structure, homohexamer. Forms an RuvA(8)-RuvB(12)-Holliday junction (HJ) complex. HJ DNA is sandwiched between 2 RuvA tetramers; dsDNA enters through RuvA and exits via RuvB. An RuvB hexamer assembles on each DNA strand where it exits the tetramer. Each RuvB hexamer is contacted by two RuvA subunits (via domain III) on 2 adjacent RuvB subunits; this complex drives branch migration. In the full resolvosome a probable DNA-RuvA(4)-RuvB(12)-RuvC(2) complex forms which resolves the HJ.

The protein resides in the cytoplasm. It catalyses the reaction ATP + H2O = ADP + phosphate + H(+). In terms of biological role, the RuvA-RuvB-RuvC complex processes Holliday junction (HJ) DNA during genetic recombination and DNA repair, while the RuvA-RuvB complex plays an important role in the rescue of blocked DNA replication forks via replication fork reversal (RFR). RuvA specifically binds to HJ cruciform DNA, conferring on it an open structure. The RuvB hexamer acts as an ATP-dependent pump, pulling dsDNA into and through the RuvAB complex. RuvB forms 2 homohexamers on either side of HJ DNA bound by 1 or 2 RuvA tetramers; 4 subunits per hexamer contact DNA at a time. Coordinated motions by a converter formed by DNA-disengaged RuvB subunits stimulates ATP hydrolysis and nucleotide exchange. Immobilization of the converter enables RuvB to convert the ATP-contained energy into a lever motion, pulling 2 nucleotides of DNA out of the RuvA tetramer per ATP hydrolyzed, thus driving DNA branch migration. The RuvB motors rotate together with the DNA substrate, which together with the progressing nucleotide cycle form the mechanistic basis for DNA recombination by continuous HJ branch migration. Branch migration allows RuvC to scan DNA until it finds its consensus sequence, where it cleaves and resolves cruciform DNA. The chain is Holliday junction branch migration complex subunit RuvB from Helicobacter pylori (strain Shi470).